A 767-amino-acid polypeptide reads, in one-letter code: Polyketide biosynthesis protein PksE (767 aa).

The tract at residues 1 to 312 is acyl transferase; that stretch reads MITYVFPGQG…QRNVQAGITA (312 aa). Active-site residues include S87 and H193.

In the N-terminal section; belongs to the FabD family.

Its subcellular location is the cytoplasm. It catalyses the reaction holo-[ACP] + malonyl-CoA = malonyl-[ACP] + CoA. It participates in antibiotic biosynthesis; bacillaene biosynthesis. Probably involved in some intermediate steps for the synthesis of the antibiotic polyketide bacillaene which is involved in secondary metabolism. Probably has an acyl transferase activity and could also have a flavin mononucleotide-dependent oxidoreductase activity. In Bacillus subtilis (strain 168), this protein is Polyketide biosynthesis protein PksE (pksE).